A 415-amino-acid chain; its full sequence is NAD-dependent protein deacetylase hst4 (415 aa).

The segment at 1 to 26 (MKVEEHVPLIQESRKRKCQSSENASK) is disordered. The region spanning 40–337 (TGNENVDLSP…RRLKPLLDAP (298 aa)) is the Deacetylase sirtuin-type domain. NAD(+) contacts are provided by residues 65–84 (GAGI…EGLF) and 153–156 (QNID). Residue His184 is the Proton acceptor of the active site. Cys192, Cys195, Cys214, and Cys217 together coordinate Zn(2+). NAD(+)-binding positions include 273–275 (GTS), 303–305 (NYD), and Leu323.

Belongs to the sirtuin family. Class I subfamily. The cofactor is Zn(2+).

It localises to the nucleus. Its subcellular location is the nucleolus. It catalyses the reaction N(6)-acetyl-L-lysyl-[protein] + NAD(+) + H2O = 2''-O-acetyl-ADP-D-ribose + nicotinamide + L-lysyl-[protein]. Functionally, NAD-dependent histone deacetylase, which contributes to both telomeric and centromeric silencing, proper cell cycle progression, DNA damage control, recombination, and genomic maintenance. This Schizosaccharomyces pombe (strain 972 / ATCC 24843) (Fission yeast) protein is NAD-dependent protein deacetylase hst4 (hst4).